Consider the following 713-residue polypeptide: tRNA 5-methylaminomethyl-2-thiouridine biosynthesis bifunctional protein MnmC (713 aa).

A tRNA (mnm(5)s(2)U34)-methyltransferase region spans residues 1–300 (MTAEPNKPCQ…MAAILSSATP (300 aa)). An FAD-dependent cmnm(5)s(2)U34 oxidoreductase region spans residues 306 to 713 (IGGGLASAHL…LRKLLKGKAL (408 aa)).

The protein in the N-terminal section; belongs to the methyltransferase superfamily. tRNA (mnm(5)s(2)U34)-methyltransferase family. In the C-terminal section; belongs to the DAO family. It depends on FAD as a cofactor.

Its subcellular location is the cytoplasm. The catalysed reaction is 5-aminomethyl-2-thiouridine(34) in tRNA + S-adenosyl-L-methionine = 5-methylaminomethyl-2-thiouridine(34) in tRNA + S-adenosyl-L-homocysteine + H(+). Catalyzes the last two steps in the biosynthesis of 5-methylaminomethyl-2-thiouridine (mnm(5)s(2)U) at the wobble position (U34) in tRNA. Catalyzes the FAD-dependent demodification of cmnm(5)s(2)U34 to nm(5)s(2)U34, followed by the transfer of a methyl group from S-adenosyl-L-methionine to nm(5)s(2)U34, to form mnm(5)s(2)U34. In Shewanella baltica (strain OS155 / ATCC BAA-1091), this protein is tRNA 5-methylaminomethyl-2-thiouridine biosynthesis bifunctional protein MnmC.